A 137-amino-acid chain; its full sequence is Large ribosomal subunit protein uL16 (137 aa).

This sequence belongs to the universal ribosomal protein uL16 family. As to quaternary structure, part of the 50S ribosomal subunit.

Functionally, binds 23S rRNA and is also seen to make contacts with the A and possibly P site tRNAs. The chain is Large ribosomal subunit protein uL16 from Psychrobacter cryohalolentis (strain ATCC BAA-1226 / DSM 17306 / VKM B-2378 / K5).